We begin with the raw amino-acid sequence, 238 residues long: Tyrosine recombinase XerD-like (238 aa).

Residues 1 to 75 form the Core-binding (CB) domain; the sequence is MKLPNEIEEY…SANQYFLFLY (75 aa). A Tyr recombinase domain is found at 90–238; sequence VQKKTQSSES…TITALEKYYR (149 aa). Active-site residues include Lys-154 and Arg-204. Residue Tyr-236 is the O-(3'-phospho-DNA)-tyrosine intermediate of the active site.

Belongs to the 'phage' integrase family. XerD-like subfamily.

The protein resides in the cytoplasm. Putative tyrosine recombinase. Not involved in the cutting and rejoining of the recombining DNA molecules on dif(SL) site. The chain is Tyrosine recombinase XerD-like from Lactococcus lactis subsp. cremoris (strain SK11).